Consider the following 505-residue polypeptide: Peroxisome proliferator-activated receptor gamma (505 aa).

Residue T84 is glycosylated (O-linked (GlcNAc) threonine). S112 is subject to Phosphoserine. Residues A136–F210 constitute a DNA-binding region (nuclear receptor). 2 NR C4-type zinc fingers span residues C139 to C159 and C176 to C198. Residues H205–M280 form an interaction with FAM120B region. The NR LBD domain occupies D238 to D503. Residue K252 forms a Glycyl lysine isopeptide (Lys-Gly) (interchain with G-Cter in ubiquitin) linkage. Rosiglitazone-binding positions include Q314–S317, H351, H477, and Y501. Residues P495–D503 carry the 9aaTAD motif.

It belongs to the nuclear hormone receptor family. NR1 subfamily. In terms of assembly, interacts with FOXO1 (acetylated form). Heterodimer with other nuclear receptors, such as RXRA. The heterodimer with the retinoic acid receptor RXRA is called adipocyte-specific transcription factor ARF6. Interacts with NCOA6 coactivator, leading to a strong increase in transcription of target genes. Interacts with coactivator PPARBP, leading to a mild increase in transcription of target genes. Interacts with NOCA7 in a ligand-inducible manner. Interacts with NCOA1 and NCOA2 LXXLL motifs. Interacts with ASXL1, ASXL2, DNTTIP2, FAM120B, MAP2K1/MEK1, NR0B2, PDPK1, PRDM16, PRMT2 and TGFB1I1. Interacts (when activated by agonist) with PPP5C. Interacts with HELZ2 and THRAP3; the interaction stimulates the transcriptional activity of PPARG. Interacts with PER2, the interaction is ligand dependent and blocks PPARG recruitment to target promoters. Interacts with NOCT. Interacts with ACTN4. Interacts (when in the liganded conformation) with GPS2. Interacts with CRY1 and CRY2 in a ligand-dependent manner. In the absence of hormonal ligand, interacts with TACC1. In macrophages, interacts with PAQR3 and STUB1; the interactions promote PPARG poylubiquitination and STUB1-mediated degradation. In terms of processing, O-GlcNAcylation at Thr-84 reduces transcriptional activity in adipocytes. Post-translationally, phosphorylated in basal conditions and dephosphorylated when treated with the ligand. May be dephosphorylated by PPP5C. The phosphorylated form may be inactive and dephosphorylation at Ser-112 induces adipogenic activity. Ubiquitinated by E3 ubiquitin-protein ligase complex containing FBXO9; leading to proteasomal degradation. Ubiquitinated at Lys-252 by TRIM55 leading to proteasomal degradation. Ubiquitinated by E3 ubiquitin-protein ligase STUB1/CHIP; leading to proteasomal degradation. In terms of tissue distribution, highest expression in adipose tissue. Lower in skeletal muscle, spleen, heart and liver. Also detectable in placenta, lung and ovary.

The protein localises to the nucleus. It localises to the cytoplasm. Its activity is regulated as follows. PDPK1 activates its transcriptional activity independently of its kinase activity. In terms of biological role, nuclear receptor that binds peroxisome proliferators such as hypolipidemic drugs and fatty acids. Once activated by a ligand, the nuclear receptor binds to DNA specific PPAR response elements (PPRE) and modulates the transcription of its target genes, such as acyl-CoA oxidase. It therefore controls the peroxisomal beta-oxidation pathway of fatty acids. Key regulator of adipocyte differentiation and glucose homeostasis. ARF6 acts as a key regulator of the tissue-specific adipocyte P2 (aP2) enhancer. Acts as a critical regulator of gut homeostasis by suppressing NF-kappa-B-mediated pro-inflammatory responses. Plays a role in the regulation of cardiovascular circadian rhythms by regulating the transcription of BMAL1 in the blood vessels. (Microbial infection) Upon treatment with M.tuberculosis or its lipoprotein LpqH, phosphorylation of MAPK p38 and IL-6 production are modulated, probably via this protein. This Homo sapiens (Human) protein is Peroxisome proliferator-activated receptor gamma (PPARG).